The following is a 398-amino-acid chain: Acetate kinase (398 aa).

Position 8 (asparagine 8) interacts with Mg(2+). Lysine 15 contacts ATP. Arginine 89 serves as a coordination point for substrate. The active-site Proton donor/acceptor is the aspartate 146. ATP is bound by residues 206 to 210, 283 to 285, and 331 to 335; these read HIGNG, DMR, and GMGEN. Position 383 (glutamate 383) interacts with Mg(2+).

The protein belongs to the acetokinase family. As to quaternary structure, homodimer. Requires Mg(2+) as cofactor. Mn(2+) is required as a cofactor.

Its subcellular location is the cytoplasm. It catalyses the reaction acetate + ATP = acetyl phosphate + ADP. It functions in the pathway metabolic intermediate biosynthesis; acetyl-CoA biosynthesis; acetyl-CoA from acetate: step 1/2. Its function is as follows. Catalyzes the formation of acetyl phosphate from acetate and ATP. Can also catalyze the reverse reaction. This is Acetate kinase from Streptococcus pyogenes serotype M49 (strain NZ131).